The sequence spans 197 residues: Guanylate kinase (197 aa).

S2 is modified (N-acetylserine). Residues 4-186 (PRPVVLSGPS…AYAELKEALS (183 aa)) enclose the Guanylate kinase-like domain. An ATP-binding site is contributed by 14–19 (GAGKST). Substrate is bound at residue 37–51 (SHTTRNPRPGEENGK). Residues R44, R137, and R148 contribute to the active site. R137 is an ATP binding site. 171 to 172 (ND) is an ATP binding site.

Belongs to the guanylate kinase family. In terms of assembly, monomer. Interacts with RD3. In terms of tissue distribution, widely expressed.

The protein localises to the photoreceptor inner segment. Its subcellular location is the cytoplasm. The protein resides in the cytosol. It is found in the mitochondrion. The enzyme catalyses GMP + ATP = GDP + ADP. Its activity is regulated as follows. Up-regulated by RD3. Its function is as follows. Catalyzes the phosphorylation of GMP to GDP. Essential enzyme for recycling GMP and indirectly, cyclic GMP (cGMP). Involved in the cGMP metabolism in photoreceptors. It may also have a role in the survival and growth progression of some tumors. In addition to its physiological role, GUK1 is essential for converting prodrugs used for the treatment of cancers and viral infections into their pharmacologically active metabolites, most notably acyclovir, ganciclovir, and 6-thioguanine and its closely related analog 6-mercaptopurine. The protein is Guanylate kinase of Homo sapiens (Human).